We begin with the raw amino-acid sequence, 202 residues long: Holliday junction branch migration complex subunit RuvA (202 aa).

The interval 1 to 64 (MIGYLKGQIL…YDGTVLYGFL (64 aa)) is domain I. The segment at 65–146 (TKEDKQLWAI…AVTIAGVPKI (82 aa)) is domain II. Positions 147-155 (KIEGEAPFM) are flexible linker. The tract at residues 155–202 (MSEVMMALTALGYSPMEARKAIDQLYKTGLANDSVENIIRAALRILKK) is domain III.

It belongs to the RuvA family. In terms of assembly, homotetramer. Forms an RuvA(8)-RuvB(12)-Holliday junction (HJ) complex. HJ DNA is sandwiched between 2 RuvA tetramers; dsDNA enters through RuvA and exits via RuvB. An RuvB hexamer assembles on each DNA strand where it exits the tetramer. Each RuvB hexamer is contacted by two RuvA subunits (via domain III) on 2 adjacent RuvB subunits; this complex drives branch migration. In the full resolvosome a probable DNA-RuvA(4)-RuvB(12)-RuvC(2) complex forms which resolves the HJ.

The protein resides in the cytoplasm. Functionally, the RuvA-RuvB-RuvC complex processes Holliday junction (HJ) DNA during genetic recombination and DNA repair, while the RuvA-RuvB complex plays an important role in the rescue of blocked DNA replication forks via replication fork reversal (RFR). RuvA specifically binds to HJ cruciform DNA, conferring on it an open structure. The RuvB hexamer acts as an ATP-dependent pump, pulling dsDNA into and through the RuvAB complex. HJ branch migration allows RuvC to scan DNA until it finds its consensus sequence, where it cleaves and resolves the cruciform DNA. This is Holliday junction branch migration complex subunit RuvA from Elusimicrobium minutum (strain Pei191).